Consider the following 194-residue polypeptide: Peroxynitrite isomerase 1 (194 aa).

The GXWXGXG signature appears at glycine 40 to glycine 46. 2 residues coordinate heme b: lysine 157 and histidine 184.

The protein belongs to the nitrobindin family. As to quaternary structure, homodimer. Heme b is required as a cofactor.

It carries out the reaction peroxynitrite = nitrate. It functions in the pathway nitrogen metabolism. In terms of biological role, heme-binding protein able to scavenge peroxynitrite and to protect free L-tyrosine against peroxynitrite-mediated nitration, by acting as a peroxynitrite isomerase that converts peroxynitrite to nitrate. Therefore, this protein likely plays a role in peroxynitrite sensing and in the detoxification of reactive nitrogen and oxygen species (RNS and ROS, respectively). Is able to bind nitric oxide (NO) in vitro, but may act as a sensor of peroxynitrite levels in vivo. The polypeptide is Peroxynitrite isomerase 1 (Mycobacterium ulcerans (strain Agy99)).